We begin with the raw amino-acid sequence, 266 residues long: MKLSLSSPPYADAPVVVLISGLGGSGSYWLPQLAVLEQEYQVVCYDQRGTGNNPDTLAEDYSIAQMAAELHQALVAAGIERYAVVGHALGALVGMQLALDYPASVTMLVSVNGWLRINAHTRRCFQVRERLLYSGGAQAWVEAQPLFLYPADWMAARAPRLEAEDALALAHFQGKNNLLRRLNALKRADFSHHADRIRCPVQIICASDDLLVPTACSSELHAALPDSQKMVMPYGGHACNVTDPETFNALLLNGLASLLHHREAAL.

An AB hydrolase-1 domain is found at P14–L115.

It belongs to the AB hydrolase superfamily. Hydrolase RutD family.

It catalyses the reaction carbamate + 2 H(+) = NH4(+) + CO2. Functionally, involved in pyrimidine catabolism. May facilitate the hydrolysis of carbamate, a reaction that can also occur spontaneously. The chain is Putative carbamate hydrolase RutD from Shigella flexneri serotype X (strain 2002017).